The chain runs to 188 residues: Elongation factor P (188 aa).

Belongs to the elongation factor P family.

The protein localises to the cytoplasm. The protein operates within protein biosynthesis; polypeptide chain elongation. Functionally, involved in peptide bond synthesis. Stimulates efficient translation and peptide-bond synthesis on native or reconstituted 70S ribosomes in vitro. Probably functions indirectly by altering the affinity of the ribosome for aminoacyl-tRNA, thus increasing their reactivity as acceptors for peptidyl transferase. This Phytoplasma mali (strain AT) protein is Elongation factor P.